The primary structure comprises 280 residues: DegV domain-containing protein CA_C1624 (280 aa).

Residues 4-279 (IALITDSTSD…PGLLGVVIFK (276 aa)) enclose the DegV domain. Hexadecanoate is bound by residues threonine 60 and serine 93.

May bind long-chain fatty acids, such as palmitate, and may play a role in lipid transport or fatty acid metabolism. The chain is DegV domain-containing protein CA_C1624 from Clostridium acetobutylicum (strain ATCC 824 / DSM 792 / JCM 1419 / IAM 19013 / LMG 5710 / NBRC 13948 / NRRL B-527 / VKM B-1787 / 2291 / W).